The chain runs to 227 residues: DNA repair protein RecO (227 aa).

Belongs to the RecO family.

Involved in DNA repair and RecF pathway recombination. The chain is DNA repair protein RecO from Pseudomonas syringae pv. syringae (strain B728a).